The following is a 79-amino-acid chain: ATP synthase subunit c (79 aa).

The next 2 helical transmembrane spans lie at 11–31 (IAAA…IGIL) and 53–73 (FFIV…LSLY).

This sequence belongs to the ATPase C chain family. As to quaternary structure, F-type ATPases have 2 components, F(1) - the catalytic core - and F(0) - the membrane proton channel. F(1) has five subunits: alpha(3), beta(3), gamma(1), delta(1), epsilon(1). F(0) has three main subunits: a(1), b(2) and c(10-14). The alpha and beta chains form an alternating ring which encloses part of the gamma chain. F(1) is attached to F(0) by a central stalk formed by the gamma and epsilon chains, while a peripheral stalk is formed by the delta and b chains.

It is found in the cell inner membrane. F(1)F(0) ATP synthase produces ATP from ADP in the presence of a proton or sodium gradient. F-type ATPases consist of two structural domains, F(1) containing the extramembraneous catalytic core and F(0) containing the membrane proton channel, linked together by a central stalk and a peripheral stalk. During catalysis, ATP synthesis in the catalytic domain of F(1) is coupled via a rotary mechanism of the central stalk subunits to proton translocation. Its function is as follows. Key component of the F(0) channel; it plays a direct role in translocation across the membrane. A homomeric c-ring of between 10-14 subunits forms the central stalk rotor element with the F(1) delta and epsilon subunits. This is ATP synthase subunit c from Blochmanniella floridana.